The sequence spans 350 residues: Biotin synthase (350 aa).

Positions 54–278 constitute a Radical SAM core domain; the sequence is REIQLSTLLS…TMPQSYVRLS (225 aa). [4Fe-4S] cluster is bound by residues cysteine 69, cysteine 73, and cysteine 76. [2Fe-2S] cluster is bound by residues cysteine 113, cysteine 144, cysteine 204, and arginine 276.

The protein belongs to the radical SAM superfamily. Biotin synthase family. As to quaternary structure, homodimer. Requires [4Fe-4S] cluster as cofactor. It depends on [2Fe-2S] cluster as a cofactor.

The catalysed reaction is (4R,5S)-dethiobiotin + (sulfur carrier)-SH + 2 reduced [2Fe-2S]-[ferredoxin] + 2 S-adenosyl-L-methionine = (sulfur carrier)-H + biotin + 2 5'-deoxyadenosine + 2 L-methionine + 2 oxidized [2Fe-2S]-[ferredoxin]. It participates in cofactor biosynthesis; biotin biosynthesis; biotin from 7,8-diaminononanoate: step 2/2. Its function is as follows. Catalyzes the conversion of dethiobiotin (DTB) to biotin by the insertion of a sulfur atom into dethiobiotin via a radical-based mechanism. This chain is Biotin synthase, found in Neisseria gonorrhoeae (strain ATCC 700825 / FA 1090).